The primary structure comprises 594 residues: Solute carrier family 13 member 1 (594 aa).

Transmembrane regions (helical) follow at residues 13-33 (FLLVVFTILVFLPLPLIIRTK), 40-60 (ILFVIAIFWITEALPLSITAL), 77-97 (VASAYFKDFHLLLIGVICLAT), 113-133 (VMMVGVNPAWLTLGFMSSTAF), and 134-154 (LSMWLSNTSTAAMVMPIVEAV). Asparagine 174 is a glycosylation site (N-linked (GlcNAc...) asparagine). Over residues 192–220 (TNEKKEKTKPAPGSSHDKGKVSRKMETEK) the composition is skewed to basic and acidic residues. Residues 192–226 (TNEKKEKTKPAPGSSHDKGKVSRKMETEKNAVTGA) are disordered. Transmembrane regions (helical) follow at residues 239-259 (LMCLSVAYSSTIGGLTTITGT), 283-303 (SWFLFSFPVALILLLLSWIWL), 347-367 (IVTLVIFIVMALLWFSRDPGF), 380-400 (GYVTDSTVALVAGILFFLIPA), 461-481 (LSPLGSLPVWLIILISSLIVT), 487-507 (ASNPATITILFPILSPLAEAI), 511-531 (PLQILLPSTLCTSFAFLLPVA), and 552-572 (AGLGVNILGVAVVMLGMFTWI). Asparagine 590 carries an N-linked (GlcNAc...) asparagine glycan.

Belongs to the SLC13A/DASS transporter (TC 2.A.47) family. NADC subfamily. Highly expressed in kidney and ileum, detected at lower levels in duodenum/jejunum and colon, and at very low levels in cecum, testis, adrenal and adipose tissues. In terms of tissue distribution, expressed in the kidney.

The protein localises to the apical cell membrane. The enzyme catalyses sulfate(out) + 3 Na(+)(out) = sulfate(in) + 3 Na(+)(in). It catalyses the reaction selenate(out) + 3 Na(+)(out) = selenate(in) + 3 Na(+)(in). The catalysed reaction is thiosulfate(out) + 3 Na(+)(out) = thiosulfate(in) + 3 Na(+)(in). Functionally, sodium:sulfate symporter that mediates sulfate reabsorption in the kidney and small intestine. Can also mediate the transport of selenate and thiosulfate. The polypeptide is Solute carrier family 13 member 1 (Slc13a1) (Mus musculus (Mouse)).